We begin with the raw amino-acid sequence, 113 residues long: Probable 4-amino-4-deoxy-L-arabinose-phosphoundecaprenol flippase subunit ArnE (113 aa).

Helical transmembrane passes span 37-57, 62-82, and 91-111; these read SALKWLIGAVILLAVGMLFWL, ILPLGIAYPMLSINFIMVTLA, and AGIKHWSGVVFIMLGILLMSL. Positions 45-111 constitute an EamA domain; that stretch reads AVILLAVGML…IMLGILLMSL (67 aa).

This sequence belongs to the ArnE family. In terms of assembly, heterodimer of ArnE and ArnF.

The protein localises to the cell inner membrane. It participates in bacterial outer membrane biogenesis; lipopolysaccharide biosynthesis. Functionally, translocates 4-amino-4-deoxy-L-arabinose-phosphoundecaprenol (alpha-L-Ara4N-phosphoundecaprenol) from the cytoplasmic to the periplasmic side of the inner membrane. The polypeptide is Probable 4-amino-4-deoxy-L-arabinose-phosphoundecaprenol flippase subunit ArnE (Photorhabdus laumondii subsp. laumondii (strain DSM 15139 / CIP 105565 / TT01) (Photorhabdus luminescens subsp. laumondii)).